The following is a 72-amino-acid chain: Gas vesicle protein A (72 aa).

Belongs to the gas vesicle GvpA family. As to quaternary structure, the gas vesicle shell is 2 nm thick and consists of a single layer of this protein. It forms helical ribs nearly perpendicular to the long axis of the vesicle.

Its subcellular location is the gas vesicle shell. Functionally, gas vesicles are hollow, gas filled proteinaceous nanostructures found in some microorganisms. During planktonic growth they allow positioning of the organism at a favorable depth for light or nutrient acquisition. GvpA forms the protein shell. The sequence is that of Gas vesicle protein A from Geotalea uraniireducens (strain Rf4) (Geobacter uraniireducens).